We begin with the raw amino-acid sequence, 275 residues long: 2,3,4,5-tetrahydropyridine-2,6-dicarboxylate N-succinyltransferase (275 aa).

The substrate site is built by Arg108 and Asp145.

Belongs to the transferase hexapeptide repeat family. As to quaternary structure, homotrimer.

It is found in the cytoplasm. The catalysed reaction is (S)-2,3,4,5-tetrahydrodipicolinate + succinyl-CoA + H2O = (S)-2-succinylamino-6-oxoheptanedioate + CoA. It functions in the pathway amino-acid biosynthesis; L-lysine biosynthesis via DAP pathway; LL-2,6-diaminopimelate from (S)-tetrahydrodipicolinate (succinylase route): step 1/3. The protein is 2,3,4,5-tetrahydropyridine-2,6-dicarboxylate N-succinyltransferase of Jannaschia sp. (strain CCS1).